Here is a 369-residue protein sequence, read N- to C-terminus: RNA-binding protein rnp24 (369 aa).

Disordered regions lie at residues 1 to 77 (MEPI…KKKE), 200 to 219 (TDFSGRPSKPANTLSKTASI), and 304 to 369 (RMRN…IKFD). In terms of domain architecture, RRM 1 spans 105-206 (WGIWVGNLSF…KSNTDFSGRP (102 aa)). Polar residues predominate over residues 209–219 (PANTLSKTASI). An RRM 2 domain is found at 228–310 (SILFVGNLDF…RSKRMRNKSP (83 aa)). Positions 325 to 341 (QEDKPNFKRARKIDPRS) are enriched in basic and acidic residues. The segment covering 346-357 (AALAKAQRSSAA) has biased composition (low complexity).

The protein localises to the nucleus. In Schizosaccharomyces pombe (strain 972 / ATCC 24843) (Fission yeast), this protein is RNA-binding protein rnp24 (rnp24).